The chain runs to 93 residues: HIG1 domain family member 1A, mitochondrial (93 aa).

At serine 2 the chain carries N-acetylserine. One can recognise an HIG1 domain in the interval 2–93 (STNTDLSLSS…YQEFWAKRKP (92 aa)). The residue at position 8 (serine 8) is a Phosphoserine. Helical transmembrane passes span 28–48 (PFVP…LYKL) and 69–89 (GFVV…EFWA). The Mitochondrial matrix portion of the chain corresponds to 90–93 (KRKP).

In terms of assembly, associates with cytochrome c oxidase (COX, complex IV); proposed complex component. Also associates with respiratory chain supercomplexes. Expressed in brain and spinal cord.

The protein localises to the mitochondrion membrane. It localises to the mitochondrion inner membrane. Proposed subunit of cytochrome c oxidase (COX, complex IV), which is the terminal component of the mitochondrial respiratory chain that catalyzes the reduction of oxygen to water. May play a role in the assembly of respiratory supercomplexes. The polypeptide is HIG1 domain family member 1A, mitochondrial (Higd1a) (Rattus norvegicus (Rat)).